The following is a 41-amino-acid chain: U-megalopygitoxin(11)-Mo28 (41 aa).

The N-terminal stretch at 1-29 (MRTTLLLLIIAITVMVFVSEAYAAPAPEP) is a signal peptide.

This sequence belongs to the caterpillar 11 family. As to expression, expressed by the venom apparatus.

It localises to the secreted. In terms of biological role, probable toxin. The protein is U-megalopygitoxin(11)-Mo28 of Megalopyge opercularis (Southern flannel moth).